We begin with the raw amino-acid sequence, 513 residues long: Histidine ammonia-lyase (513 aa).

Residues 146 to 148 constitute a cross-link (5-imidazolinone (Ala-Gly)); the sequence is ASG. Serine 147 carries the post-translational modification 2,3-didehydroalanine (Ser).

It belongs to the PAL/histidase family. In terms of processing, contains an active site 4-methylidene-imidazol-5-one (MIO), which is formed autocatalytically by cyclization and dehydration of residues Ala-Ser-Gly.

The protein localises to the cytoplasm. It carries out the reaction L-histidine = trans-urocanate + NH4(+). The protein operates within amino-acid degradation; L-histidine degradation into L-glutamate; N-formimidoyl-L-glutamate from L-histidine: step 1/3. This Shewanella oneidensis (strain ATCC 700550 / JCM 31522 / CIP 106686 / LMG 19005 / NCIMB 14063 / MR-1) protein is Histidine ammonia-lyase.